Consider the following 376-residue polypeptide: Erythronate-4-phosphate dehydrogenase (376 aa).

Substrate contacts are provided by Ser-45 and Thr-67. NAD(+)-binding positions include 127-128 (QV), Asp-147, and Thr-176. Residue Arg-209 is part of the active site. Position 233 (Asp-233) interacts with NAD(+). Residue Glu-238 is part of the active site. Residue His-255 is the Proton donor of the active site. NAD(+) is bound at residue Gly-258. Tyr-259 contacts substrate.

Belongs to the D-isomer specific 2-hydroxyacid dehydrogenase family. PdxB subfamily. Homodimer.

The protein resides in the cytoplasm. It carries out the reaction 4-phospho-D-erythronate + NAD(+) = (R)-3-hydroxy-2-oxo-4-phosphooxybutanoate + NADH + H(+). It participates in cofactor biosynthesis; pyridoxine 5'-phosphate biosynthesis; pyridoxine 5'-phosphate from D-erythrose 4-phosphate: step 2/5. Its function is as follows. Catalyzes the oxidation of erythronate-4-phosphate to 3-hydroxy-2-oxo-4-phosphonooxybutanoate. The sequence is that of Erythronate-4-phosphate dehydrogenase from Aliivibrio salmonicida (strain LFI1238) (Vibrio salmonicida (strain LFI1238)).